A 222-amino-acid polypeptide reads, in one-letter code: Pyrrolidone-carboxylate peptidase (222 aa).

Catalysis depends on residues Glu80, Cys146, and His170.

Belongs to the peptidase C15 family. Homotetramer.

The protein localises to the cytoplasm. The enzyme catalyses Release of an N-terminal pyroglutamyl group from a polypeptide, the second amino acid generally not being Pro.. Functionally, removes 5-oxoproline from various penultimate amino acid residues except L-proline. This chain is Pyrrolidone-carboxylate peptidase, found in Mycobacterium marinum (strain ATCC BAA-535 / M).